The sequence spans 861 residues: 1,4-alpha-glucan-branching enzyme (861 aa).

Positions 173 and 208 each coordinate (1,4-alpha-D-glucosyl)n. The active-site Nucleophile is the Asp-429. Glu-484 acts as the Proton donor in catalysis.

Belongs to the glycosyl hydrolase 13 family. GlgB subfamily. As to quaternary structure, monomer.

It localises to the plastid. The protein resides in the chloroplast. It is found in the amyloplast. It catalyses the reaction Transfers a segment of a (1-&gt;4)-alpha-D-glucan chain to a primary hydroxy group in a similar glucan chain.. The protein operates within glycan biosynthesis; starch biosynthesis. In terms of biological role, catalyzes the formation of the alpha-1,6-glucosidic linkages in starch by scission of a 1,4-alpha-linked oligosaccharide from growing alpha-1,4-glucan chains and the subsequent attachment of the oligosaccharide to the alpha-1,6 position. The sequence is that of 1,4-alpha-glucan-branching enzyme (SBE1) from Solanum tuberosum (Potato).